The primary structure comprises 630 residues: Chaperone protein HtpG (630 aa).

The a; substrate-binding stretch occupies residues 1–336 (MTTTVEQTAE…TADLPLNVSR (336 aa)). Residues 337 to 551 (EMIQESPILA…EDGYDRQMEK (215 aa)) are b. The interval 552 to 630 (ILQNAGRLQG…VFERSVRSEG (79 aa)) is c.

It belongs to the heat shock protein 90 family. In terms of assembly, homodimer.

It localises to the cytoplasm. Its function is as follows. Molecular chaperone. Has ATPase activity. This is Chaperone protein HtpG from Rhizobium etli (strain ATCC 51251 / DSM 11541 / JCM 21823 / NBRC 15573 / CFN 42).